A 209-amino-acid chain; its full sequence is Protein lin-28 homolog A (209 aa).

The tract at residues methionine 1–alanine 31 is disordered. Glycine 2 is subject to N-acetylglycine. Phosphoserine is present on serine 3. Residues histidine 39–proline 112 enclose the CSD domain. Residues glycine 113–glycine 136 form a flexible linker region. Serine 120 is subject to Phosphoserine. 2 consecutive CCHC-type zinc fingers follow at residues aspartate 137 to leucine 154 and lysine 159 to leucine 176. Residues alanine 178–asparagine 209 form a disordered region. Serine 200 carries the phosphoserine modification.

It belongs to the lin-28 family. Monomer. During skeletal muscle differentiation, associated with translation initiation complexes in the polysomal compartment. Directly interacts with EIF3S2. Interacts with NCL in an RNA-dependent manner. Interacts (via C-terminus) with DHX9 (via N- and C-terminus); this interaction occurs in a RNA-independent manner. Interacts with TUT4 in the presence of pre-let-7 RNA. In terms of tissue distribution, expressed in embryonic stem cells, placenta and testis. Tends to be up-regulated in HER2-overexpressing breast tumors.

Its subcellular location is the cytoplasm. It localises to the rough endoplasmic reticulum. The protein resides in the P-body. The protein localises to the stress granule. It is found in the nucleus. Its subcellular location is the nucleolus. Its function is as follows. RNA-binding protein that inhibits processing of pre-let-7 miRNAs and regulates translation of mRNAs that control developmental timing, pluripotency and metabolism. Seems to recognize a common structural G-quartet (G4) feature in its miRNA and mRNA targets. 'Translational enhancer' that drives specific mRNAs to polysomes and increases the efficiency of protein synthesis. Its association with the translational machinery and target mRNAs results in an increased number of initiation events per molecule of mRNA and, indirectly, in mRNA stabilization. Binds IGF2 mRNA, MYOD1 mRNA, ARBP/36B4 ribosomal protein mRNA and its own mRNA. Essential for skeletal muscle differentiation program through the translational up-regulation of IGF2 expression. Suppressor of microRNA (miRNA) biogenesis, including that of let-7, miR107, miR-143 and miR-200c. Specifically binds the miRNA precursors (pre-miRNAs), recognizing an 5'-GGAG-3' motif found in pre-miRNA terminal loop, and recruits TUT4 and TUT7 uridylyltransferases. This results in the terminal uridylation of target pre-miRNAs. Uridylated pre-miRNAs fail to be processed by Dicer and undergo degradation. The repression of let-7 expression is required for normal development and contributes to maintain the pluripotent state by preventing let-7-mediated differentiation of embryonic stem cells. Localized to the periendoplasmic reticulum area, binds to a large number of spliced mRNAs and inhibits the translation of mRNAs destined for the ER, reducing the synthesis of transmembrane proteins, ER or Golgi lumen proteins, and secretory proteins. Binds to and enhances the translation of mRNAs for several metabolic enzymes, such as PFKP, PDHA1 or SDHA, increasing glycolysis and oxidative phosphorylation. Which, with the let-7 repression may enhance tissue repair in adult tissue. The protein is Protein lin-28 homolog A (LIN28A) of Homo sapiens (Human).